We begin with the raw amino-acid sequence, 521 residues long: DEAD-box ATP-dependent RNA helicase 12 (521 aa).

Positions 1-97 (MHHPRARYPP…QQWLRRDQAT (97 aa)) are disordered. Gly residues predominate over residues 13-50 (TSGGGGGGGGGGGGGRGNGGGGFGGGGGGGGGNHGYYG). Positions 51 to 89 (RGPQPQPQQQHYHHQAQQLHQHQQQQQHAQRNSSSQQQQ) are enriched in low complexity. Positions 147–175 (NEFEDYFLKRELLMGIYEKGFERPSPIQE) match the Q motif motif. The Helicase ATP-binding domain occupies 178–348 (IPIALTGSDI…EKYLPRPYVI (171 aa)). ATP is bound at residue 191 to 198 (AKNGTGKT). The DEAD box motif lies at 296-299 (DEAD). A Helicase C-terminal domain is found at 358 to 518 (GITQYYAFVE…TIPPQIDLAV (161 aa)).

It belongs to the DEAD box helicase family. DDX6/DHH1 subfamily.

It is found in the cytoplasm. It localises to the P-body. It catalyses the reaction ATP + H2O = ADP + phosphate + H(+). ATP-dependent RNA helicase involved in mRNA turnover, and more specifically in mRNA decapping. This is DEAD-box ATP-dependent RNA helicase 12 from Oryza sativa subsp. japonica (Rice).